The sequence spans 265 residues: Ubiquinone biosynthesis protein COQ4 homolog, mitochondrial (265 aa).

Residues 1-30 (MATLLRPVLRRLCGLPGLQRPAAEMPLRAR) constitute a mitochondrion transit peptide. Ser108 is subject to Phosphoserine. Positions 163, 164, 167, and 179 each coordinate Zn(2+).

Belongs to the COQ4 family. In terms of assembly, component of a multi-subunit COQ enzyme complex, composed of at least COQ3, COQ4, COQ5, COQ6, COQ7 and COQ9. Requires Zn(2+) as cofactor. In terms of tissue distribution, expressed ubiquitously, but at high levels in liver, lung and pancreas.

The protein resides in the mitochondrion inner membrane. It catalyses the reaction 4-hydroxy-3-methoxy-5-(all-trans-decaprenyl)benzoate + H(+) = 2-methoxy-6-(all-trans-decaprenyl)phenol + CO2. It participates in cofactor biosynthesis; ubiquinone biosynthesis. Lyase that catalyzes the C1-decarboxylation of 4-hydroxy-3-methoxy-5-(all-trans-decaprenyl)benzoic acid into 2-methoxy-6-(all-trans-decaprenyl)phenol during ubiquinone biosynthesis. The protein is Ubiquinone biosynthesis protein COQ4 homolog, mitochondrial of Homo sapiens (Human).